We begin with the raw amino-acid sequence, 206 residues long: Phosphatidyl-N-methylethanolamine N-methyltransferase (206 aa).

The Lumenal segment spans residues 1 to 20 (MKESVQEIIQQLIHSVDLQS). Residues 21–41 (SKFQLAIVCTMFNPIFWNIVA) constitute an intramembrane region (helical). Residues 42–53 (RMEYHKHSLTKM) lie on the Lumenal side of the membrane. The chain crosses the membrane as a helical span at residues 54-74 (CGGARKGCYMLAATIFSLGIV). The Cytoplasmic segment spans residues 75–101 (RDMVYESALREQPTCSLITGENWTKLG). A helical membrane pass occupies residues 102 to 122 (VALFGLGQVLVLSSMYKLGIT). 106–108 (GLG) is a binding site for S-adenosyl-L-methionine. Over 123–165 (GTYLGDYFGILMDERVTGFPFNVSNNPMYQGSTLSFLGIALYK) the chain is Lumenal. A helical transmembrane segment spans residues 166-186 (GKPAGLVVSAVVYFMYKIALR). The Cytoplasmic portion of the chain corresponds to 187-206 (WEEPFTAMIYANRDKAKKNM). S-adenosyl-L-methionine is bound at residue 188-189 (EE).

It belongs to the class VI-like SAM-binding methyltransferase superfamily. PEMT/PEM2 methyltransferase family.

Its subcellular location is the endoplasmic reticulum membrane. It is found in the mitochondrion membrane. It catalyses the reaction a 1,2-diacyl-sn-glycero-3-phosphoethanolamine + S-adenosyl-L-methionine = a 1,2-diacyl-sn-glycero-3-phospho-N-methylethanolamine + S-adenosyl-L-homocysteine + H(+). The catalysed reaction is a 1,2-diacyl-sn-glycero-3-phospho-N-methylethanolamine + S-adenosyl-L-methionine = a 1,2-diacyl-sn-glycero-3-phospho-N,N-dimethylethanolamine + S-adenosyl-L-homocysteine + H(+). The enzyme catalyses a 1,2-diacyl-sn-glycero-3-phospho-N,N-dimethylethanolamine + S-adenosyl-L-methionine = a 1,2-diacyl-sn-glycero-3-phosphocholine + S-adenosyl-L-homocysteine + H(+). The protein operates within phospholipid metabolism; phosphatidylcholine biosynthesis. Functionally, catalyzes the second two steps of the methylation pathway of phosphatidylcholine biosynthesis, the SAM-dependent methylation of phosphatidylmonomethylethanolamine (PMME) to phosphatidyldimethylethanolamine (PDME) and of PDME to phosphatidylcholine (PC). Can also catalyze the first methylation reaction of PE to PMME in the absence of PE methyltransferase CHO2. This chain is Phosphatidyl-N-methylethanolamine N-methyltransferase, found in Saccharomyces cerevisiae (strain ATCC 204508 / S288c) (Baker's yeast).